Consider the following 598-residue polypeptide: Trichothecene efflux pump TRI12 (598 aa).

Residues 42 to 62 (IVASFAAFSMNVVATYFVLQA) traverse the membrane as a helical segment. N79 is a glycosylation site (N-linked (GlcNAc...) asparagine). The next 2 membrane-spanning stretches (helical) occupy residues 109-129 (PFVI…CTAT) and 135-155 (LAAM…PLFI). A glycan (N-linked (GlcNAc...) asparagine) is linked at N161. 10 helical membrane passes run 165–185 (FLGL…SPYL), 197–217 (WIFY…IIWY), 241–261 (WIGI…VSWG), 273–293 (VIGL…YEVY), 312–332 (FVCI…LVIM), 356–376 (ATAS…FHLV), 381–401 (WQIL…SSIN), 409–429 (IALS…TMLL), 442–462 (AFAV…AAFI), and 533–553 (ANVY…SLCM). The segment at 579 to 598 (LEGNSESQPSPIILSMADKE) is disordered.

The protein belongs to the major facilitator superfamily.

It is found in the cell membrane. In terms of biological role, efflux pump that provides the dual role of trichothecene export and self-protection by allowing the fungus to evade the harmful effect of its own trichothecene production. The protein is Trichothecene efflux pump TRI12 of Fusarium sporotrichioides.